Consider the following 530-residue polypeptide: Bifunctional purine biosynthesis protein PurH (530 aa).

The 148-residue stretch at 1–148 (MNNPRPIRRA…KNHKDVTIVV (148 aa)) folds into the MGS-like domain.

This sequence belongs to the PurH family.

It carries out the reaction (6R)-10-formyltetrahydrofolate + 5-amino-1-(5-phospho-beta-D-ribosyl)imidazole-4-carboxamide = 5-formamido-1-(5-phospho-D-ribosyl)imidazole-4-carboxamide + (6S)-5,6,7,8-tetrahydrofolate. The catalysed reaction is IMP + H2O = 5-formamido-1-(5-phospho-D-ribosyl)imidazole-4-carboxamide. The protein operates within purine metabolism; IMP biosynthesis via de novo pathway; 5-formamido-1-(5-phospho-D-ribosyl)imidazole-4-carboxamide from 5-amino-1-(5-phospho-D-ribosyl)imidazole-4-carboxamide (10-formyl THF route): step 1/1. Its pathway is purine metabolism; IMP biosynthesis via de novo pathway; IMP from 5-formamido-1-(5-phospho-D-ribosyl)imidazole-4-carboxamide: step 1/1. The protein is Bifunctional purine biosynthesis protein PurH of Aliivibrio salmonicida (strain LFI1238) (Vibrio salmonicida (strain LFI1238)).